A 386-amino-acid polypeptide reads, in one-letter code: Probable zinc transporter zrg17 (386 aa).

6 consecutive transmembrane segments (helical) span residues 102–122 (ILFF…ILLT), 128–148 (IVEG…SFLV), 163–183 (MELL…MNLL), 208–228 (VHIH…FALL), 243–263 (FFHG…SLGY), and 268–288 (FLSH…GFSI).

Belongs to the cation diffusion facilitator (CDF) transporter (TC 2.A.4) family. SLC30A subfamily. Interacts with cis4.

The protein resides in the cytoplasm. It localises to the nucleus membrane. Probable transporter involved in the regulation of zinc homeostasis. The polypeptide is Probable zinc transporter zrg17 (zrg17) (Schizosaccharomyces pombe (strain 972 / ATCC 24843) (Fission yeast)).